A 139-amino-acid chain; its full sequence is UPF0310 protein RSal33209_2865 (139 aa).

The protein belongs to the UPF0310 family.

The chain is UPF0310 protein RSal33209_2865 from Renibacterium salmoninarum (strain ATCC 33209 / DSM 20767 / JCM 11484 / NBRC 15589 / NCIMB 2235).